Here is a 103-residue protein sequence, read N- to C-terminus: Translation initiation factor 1A (103 aa).

Residues 11–86 (TRVRTPRENE…EKCDVIWRYT (76 aa)) form the S1-like domain.

This sequence belongs to the eIF-1A family.

In terms of biological role, seems to be required for maximal rate of protein biosynthesis. Enhances ribosome dissociation into subunits and stabilizes the binding of the initiator Met-tRNA(I) to 40 S ribosomal subunits. This chain is Translation initiation factor 1A (eIF1A), found in Methanococcus maripaludis (strain C5 / ATCC BAA-1333).